The chain runs to 335 residues: Phosphate acyltransferase (335 aa).

This sequence belongs to the PlsX family. As to quaternary structure, homodimer. Probably interacts with PlsY.

It is found in the cytoplasm. It carries out the reaction a fatty acyl-[ACP] + phosphate = an acyl phosphate + holo-[ACP]. It participates in lipid metabolism; phospholipid metabolism. Functionally, catalyzes the reversible formation of acyl-phosphate (acyl-PO(4)) from acyl-[acyl-carrier-protein] (acyl-ACP). This enzyme utilizes acyl-ACP as fatty acyl donor, but not acyl-CoA. The chain is Phosphate acyltransferase from Desulforudis audaxviator (strain MP104C).